The primary structure comprises 305 residues: Ornithine carbamoyltransferase (305 aa).

Residues 48–51, Arg-99, and 126–129 each bind carbamoyl phosphate; these read STRT and HPCQ. Residues Asn-157, Asp-222, and 226 to 227 each bind L-ornithine; that span reads SM. Residues 262 to 263 and Arg-290 contribute to the carbamoyl phosphate site; that span reads CL.

It belongs to the aspartate/ornithine carbamoyltransferase superfamily. OTCase family.

Its subcellular location is the cytoplasm. It carries out the reaction carbamoyl phosphate + L-ornithine = L-citrulline + phosphate + H(+). It participates in amino-acid biosynthesis; L-arginine biosynthesis; L-arginine from L-ornithine and carbamoyl phosphate: step 1/3. In terms of biological role, reversibly catalyzes the transfer of the carbamoyl group from carbamoyl phosphate (CP) to the N(epsilon) atom of ornithine (ORN) to produce L-citrulline. The sequence is that of Ornithine carbamoyltransferase (argF) from Methanocaldococcus jannaschii (strain ATCC 43067 / DSM 2661 / JAL-1 / JCM 10045 / NBRC 100440) (Methanococcus jannaschii).